We begin with the raw amino-acid sequence, 310 residues long: Small ribosomal subunit biogenesis GTPase RsgA (310 aa).

Positions 77–238 (LSKQSHILAA…IIDTPGIKGF (162 aa)) constitute a CP-type G domain. Residues 126–129 (NKVD) and 180–188 (GHSGVGKST) each bind GTP. The Zn(2+) site is built by Cys262, Cys267, His269, and Cys275.

It belongs to the TRAFAC class YlqF/YawG GTPase family. RsgA subfamily. As to quaternary structure, monomer. Associates with 30S ribosomal subunit, binds 16S rRNA. The cofactor is Zn(2+).

The protein localises to the cytoplasm. In terms of biological role, one of several proteins that assist in the late maturation steps of the functional core of the 30S ribosomal subunit. Helps release RbfA from mature subunits. May play a role in the assembly of ribosomal proteins into the subunit. Circularly permuted GTPase that catalyzes slow GTP hydrolysis, GTPase activity is stimulated by the 30S ribosomal subunit. The chain is Small ribosomal subunit biogenesis GTPase RsgA from Bacteroides fragilis (strain YCH46).